The sequence spans 53 residues: uncharacterized protein (53 aa).

This is an uncharacterized protein from Bacillus subtilis (strain 168).